Reading from the N-terminus, the 144-residue chain is Large ribosomal subunit protein uL15 (144 aa).

The interval 1 to 52 (MRLNSLSPAEGAKHSAKRLGRGIGSGLGKTGGRGHKGQKSRTGGGVRRGFEG) is disordered. The span at 21 to 31 (RGIGSGLGKTG) shows a compositional bias: gly residues.

This sequence belongs to the universal ribosomal protein uL15 family. As to quaternary structure, part of the 50S ribosomal subunit.

Its function is as follows. Binds to the 23S rRNA. This Haemophilus ducreyi (strain 35000HP / ATCC 700724) protein is Large ribosomal subunit protein uL15.